A 361-amino-acid polypeptide reads, in one-letter code: Blue-sensitive opsin (361 aa).

Topologically, residues 1–43 (MHPPRPTTDLPEDFYIPMALDAPNITALSPFLVPQTHLGSPGL) are extracellular. A glycan (N-linked (GlcNAc...) asparagine) is linked at Asn24. The helical transmembrane segment at 44–68 (FRAMAAFMFLLIALGVPINTLTIFC) threads the bilayer. Over 69-80 (TARFRKLRSHLN) the chain is Cytoplasmic. The helical transmembrane segment at 81–106 (YILVNLALANLLVILVGSTTACYSFS) threads the bilayer. The Extracellular portion of the chain corresponds to 107-120 (QMYFALGPTACKIE). Cys117 and Cys194 form a disulfide bridge. Residues 121 to 140 (GFAATLGGMVSLWSLAVVAF) form a helical membrane-spanning segment. Over 141 to 159 (ERFLVICKPLGNFTFRGSH) the chain is Cytoplasmic. The helical transmembrane segment at 160–183 (AVLGCVATWVLGFVASAPPLFGWS) threads the bilayer. The Extracellular portion of the chain corresponds to 184 to 209 (RYIPEGLQCSCGPDWYTTDNKWHNES). The chain crosses the membrane as a helical span at residues 210–237 (YVLFLFTFCFGVPLAIIVFSYGRLLITL). The Cytoplasmic segment spans residues 238 to 259 (RAVARQQEQSATTQKADREVTK). A helical transmembrane segment spans residues 260–283 (MVVVMVLGFLVCWAPYTAFALWVV). The Extracellular portion of the chain corresponds to 284 to 291 (THRGRSFE). The helical transmembrane segment at 292–316 (VGLASIPSVFSKSSTVYNPVIYVLM) threads the bilayer. Position 303 is an N6-(retinylidene)lysine (Lys303). Topologically, residues 317–361 (NKQFRSCMLKLLFCGRSPFGDDEDVSGSSQATQVSSVSSSHVAPA) are cytoplasmic. A disordered region spans residues 338-361 (DEDVSGSSQATQVSSVSSSHVAPA). Low complexity predominate over residues 342-361 (SGSSQATQVSSVSSSHVAPA).

It belongs to the G-protein coupled receptor 1 family. Opsin subfamily. Phosphorylated on some or all of the serine and threonine residues present in the C-terminal region. In terms of tissue distribution, the color pigments are found in the cone photoreceptor cells.

It localises to the membrane. Visual pigments are the light-absorbing molecules that mediate vision. They consist of an apoprotein, opsin, covalently linked to cis-retinal. In Gallus gallus (Chicken), this protein is Blue-sensitive opsin.